A 620-amino-acid polypeptide reads, in one-letter code: Transcription factor GTE11 (620 aa).

Positions M1–T35 are disordered. In terms of domain architecture, Bromo spans T124–I230. An NET domain is found at N270–D351. S417 carries the phosphoserine modification. Residues E445 to D620 are transcription activation domain. Residues N470–N544 are a coiled coil. 2 disordered regions span residues K491–K511 and E597–D620.

As to quaternary structure, interacts with BT1, BT2 and BT4.

It localises to the nucleus. This Arabidopsis thaliana (Mouse-ear cress) protein is Transcription factor GTE11 (GTE11).